Reading from the N-terminus, the 101-residue chain is Large ribosomal subunit protein uL24 (101 aa).

It belongs to the universal ribosomal protein uL24 family. Part of the 50S ribosomal subunit.

Its function is as follows. One of two assembly initiator proteins, it binds directly to the 5'-end of the 23S rRNA, where it nucleates assembly of the 50S subunit. One of the proteins that surrounds the polypeptide exit tunnel on the outside of the subunit. The chain is Large ribosomal subunit protein uL24 from Borrelia recurrentis (strain A1).